The following is a 231-amino-acid chain: 5'-methylthioadenosine/S-adenosylhomocysteine nucleosidase (231 aa).

Catalysis depends on Glu-12, which acts as the Proton acceptor. Substrate is bound by residues Gly-78, Val-153, and 174 to 175 (ME). Asp-198 functions as the Proton donor in the catalytic mechanism.

This sequence belongs to the PNP/UDP phosphorylase family. MtnN subfamily.

The enzyme catalyses S-adenosyl-L-homocysteine + H2O = S-(5-deoxy-D-ribos-5-yl)-L-homocysteine + adenine. The catalysed reaction is S-methyl-5'-thioadenosine + H2O = 5-(methylsulfanyl)-D-ribose + adenine. It carries out the reaction 5'-deoxyadenosine + H2O = 5-deoxy-D-ribose + adenine. It participates in amino-acid biosynthesis; L-methionine biosynthesis via salvage pathway; S-methyl-5-thio-alpha-D-ribose 1-phosphate from S-methyl-5'-thioadenosine (hydrolase route): step 1/2. Catalyzes the irreversible cleavage of the glycosidic bond in both 5'-methylthioadenosine (MTA) and S-adenosylhomocysteine (SAH/AdoHcy) to adenine and the corresponding thioribose, 5'-methylthioribose and S-ribosylhomocysteine, respectively. Also cleaves 5'-deoxyadenosine, a toxic by-product of radical S-adenosylmethionine (SAM) enzymes, into 5-deoxyribose and adenine. The polypeptide is 5'-methylthioadenosine/S-adenosylhomocysteine nucleosidase (Vibrio vulnificus (strain YJ016)).